Consider the following 150-residue polypeptide: Cytochrome c oxidase subunit 5A, mitochondrial (150 aa).

The transit peptide at 1–41 (MLGAALRRCAVAATTWAGPRGLLHSARTPGPAAAIQSVRCY) directs the protein to the mitochondrion. The SIFI-degron signature appears at 2-20 (LGAALRRCAVAATTWAGPR). N6-acetyllysine is present on residues lysine 87 and lysine 113. Threonine 141 is modified (phosphothreonine).

Belongs to the cytochrome c oxidase subunit 5A family. In terms of assembly, component of the cytochrome c oxidase (complex IV, CIV), a multisubunit enzyme composed of 14 subunits. The complex is composed of a catalytic core of 3 subunits MT-CO1, MT-CO2 and MT-CO3, encoded in the mitochondrial DNA, and 11 supernumerary subunits COX4I, COX5A, COX5B, COX6A, COX6B, COX6C, COX7A, COX7B, COX7C, COX8 and NDUFA4, which are encoded in the nuclear genome. The complex exists as a monomer or a dimer and forms supercomplexes (SCs) in the inner mitochondrial membrane with NADH-ubiquinone oxidoreductase (complex I, CI) and ubiquinol-cytochrome c oxidoreductase (cytochrome b-c1 complex, complex III, CIII), resulting in different assemblies (supercomplex SCI(1)III(2)IV(1) and megacomplex MCI(2)III(2)IV(2)). Interacts with AFG1L. Interacts with RAB5IF. In terms of processing, in response to mitochondrial stress, the precursor protein is ubiquitinated by the SIFI complex in the cytoplasm before mitochondrial import, leading to its degradation. Within the SIFI complex, UBR4 initiates ubiquitin chain that are further elongated or branched by KCMF1.

It is found in the mitochondrion inner membrane. The protein operates within energy metabolism; oxidative phosphorylation. Component of the cytochrome c oxidase, the last enzyme in the mitochondrial electron transport chain which drives oxidative phosphorylation. The respiratory chain contains 3 multisubunit complexes succinate dehydrogenase (complex II, CII), ubiquinol-cytochrome c oxidoreductase (cytochrome b-c1 complex, complex III, CIII) and cytochrome c oxidase (complex IV, CIV), that cooperate to transfer electrons derived from NADH and succinate to molecular oxygen, creating an electrochemical gradient over the inner membrane that drives transmembrane transport and the ATP synthase. Cytochrome c oxidase is the component of the respiratory chain that catalyzes the reduction of oxygen to water. Electrons originating from reduced cytochrome c in the intermembrane space (IMS) are transferred via the dinuclear copper A center (CU(A)) of subunit 2 and heme A of subunit 1 to the active site in subunit 1, a binuclear center (BNC) formed by heme A3 and copper B (CU(B)). The BNC reduces molecular oxygen to 2 water molecules using 4 electrons from cytochrome c in the IMS and 4 protons from the mitochondrial matrix. The sequence is that of Cytochrome c oxidase subunit 5A, mitochondrial (COX5A) from Macaca mulatta (Rhesus macaque).